An 80-amino-acid chain; its full sequence is Gamma-conotoxin PnVIIA (80 aa).

The first 19 residues, 1 to 19 (MEKLTILLLVAAVLMSTQA), serve as a signal peptide directing secretion. Residues 20–43 (QNQEQRQQAKINFLSKRKPSAERW) constitute a propeptide that is removed on maturation. 3 disulfide bridges follow: Cys-47/Cys-61, Cys-54/Cys-65, and Cys-60/Cys-70. Position 59 is a 4-carboxyglutamate (Glu-59). Glu-71 carries the post-translational modification 4-carboxyglutamate. Residue Pro-76 is modified to 4-hydroxyproline. Positions 78–80 (FGA) are excised as a propeptide.

As to expression, expressed by the venom duct.

The protein resides in the secreted. Its function is as follows. Gamma-conotoxins may act on voltage-gated non-specific cation pacemaker channels (HCN). Triggers depolarization and firing of action potential bursts in the caudodorsal neurons of lymnaea. This effect is due to activation or enhancement of a slow inward cation current that may underlie endogenous bursting activity of these neurons. In Conus pennaceus (Feathered cone), this protein is Gamma-conotoxin PnVIIA.